Consider the following 515-residue polypeptide: Histidine ammonia-lyase (515 aa).

A cross-link (5-imidazolinone (Ala-Gly)) is located at residues 142 to 144 (ASG). At S143 the chain carries 2,3-didehydroalanine (Ser).

This sequence belongs to the PAL/histidase family. Contains an active site 4-methylidene-imidazol-5-one (MIO), which is formed autocatalytically by cyclization and dehydration of residues Ala-Ser-Gly.

The protein localises to the cytoplasm. The enzyme catalyses L-histidine = trans-urocanate + NH4(+). It functions in the pathway amino-acid degradation; L-histidine degradation into L-glutamate; N-formimidoyl-L-glutamate from L-histidine: step 1/3. This is Histidine ammonia-lyase from Bradyrhizobium sp. (strain BTAi1 / ATCC BAA-1182).